The following is a 347-amino-acid chain: NADH-quinone oxidoreductase subunit H (347 aa).

8 helical membrane-spanning segments follow: residues 25 to 45 (ILFM…VAAM), 95 to 115 (FMFT…FAII), 128 to 148 (IGIL…LFGG), 168 to 188 (ISYE…TGSF), 200 to 220 (GWYI…GVAV), 251 to 271 (FFIG…CLFF), 284 to 304 (FIPP…MFIL), and 324 to 344 (VCLP…LIFS).

The protein belongs to the complex I subunit 1 family. NDH-1 is composed of 14 different subunits. Subunits NuoA, H, J, K, L, M, N constitute the membrane sector of the complex.

It is found in the cell inner membrane. The catalysed reaction is a quinone + NADH + 5 H(+)(in) = a quinol + NAD(+) + 4 H(+)(out). Functionally, NDH-1 shuttles electrons from NADH, via FMN and iron-sulfur (Fe-S) centers, to quinones in the respiratory chain. The immediate electron acceptor for the enzyme in this species is believed to be ubiquinone. Couples the redox reaction to proton translocation (for every two electrons transferred, four hydrogen ions are translocated across the cytoplasmic membrane), and thus conserves the redox energy in a proton gradient. This subunit may bind ubiquinone. This Psychrobacter arcticus (strain DSM 17307 / VKM B-2377 / 273-4) protein is NADH-quinone oxidoreductase subunit H.